Reading from the N-terminus, the 253-residue chain is Cell division protein ZapD (253 aa).

The protein belongs to the ZapD family. As to quaternary structure, interacts with FtsZ.

The protein resides in the cytoplasm. Its function is as follows. Cell division factor that enhances FtsZ-ring assembly. Directly interacts with FtsZ and promotes bundling of FtsZ protofilaments, with a reduction in FtsZ GTPase activity. In Bordetella bronchiseptica (strain ATCC BAA-588 / NCTC 13252 / RB50) (Alcaligenes bronchisepticus), this protein is Cell division protein ZapD.